A 229-amino-acid polypeptide reads, in one-letter code: MHIERLDFENSPYLGVYGRATDRVLLLREGLGEKKLEVLREVLKVPIIETSIMKSRIVGIFAAGNSNAIIVPWYIWDAELERIKTALNEFGIDMDVVPFKSRLTALGNLILTNDKAALVSKEFTREEANAIGEILGVDEVERGMIASYRSVGSVGVVTNKGGLVHPEATDEELEWLSDLFGVDIYVGTANMGVPFVGSCMLANSYGVVVGHLTTGPEIVKIEEALGFLG.

This sequence belongs to the eIF-6 family.

In terms of biological role, binds to the 50S ribosomal subunit and prevents its association with the 30S ribosomal subunit to form the 70S initiation complex. This chain is Translation initiation factor 6, found in Thermococcus kodakarensis (strain ATCC BAA-918 / JCM 12380 / KOD1) (Pyrococcus kodakaraensis (strain KOD1)).